Here is a 427-residue protein sequence, read N- to C-terminus: Membrane-bound hydrogenase subunit alpha (427 aa).

Ni(2+)-binding residues include cysteine 68, cysteine 71, cysteine 374, and cysteine 377.

This sequence belongs to the complex I 49 kDa subunit family. As to quaternary structure, the membrane-bound hydrogenase complex is composed of MbhK and MbhL, and may also contain MbhJ. It depends on Ni(2+) as a cofactor.

It localises to the cell membrane. It catalyses the reaction H2 + 2 oxidized [2Fe-2S]-[ferredoxin] = 2 reduced [2Fe-2S]-[ferredoxin] + 2 H(+). Inhibited by 0.1 mM Cu(2+). Its function is as follows. Alpha subunit of a hydrogen-evolving hydrogenase that utilizes protons both as a substrate for hydrogen production and proton translocation. Acts by coupling the redox reaction via ferredoxin and iron-sulfur (Fe-S) clusters to proton translocation across the membrane thereby conserving the redox energy in a proton gradient. The chain is Membrane-bound hydrogenase subunit alpha from Pyrococcus furiosus (strain ATCC 43587 / DSM 3638 / JCM 8422 / Vc1).